Here is a 73-residue protein sequence, read N- to C-terminus: Mu-scoloptoxin(15)-Ssd1a (73 aa).

Residues 1–20 form the signal peptide; the sequence is MKFHIIFCLLAALMMTSAFA.

Post-translationally, contains 2 disulfide bonds. In terms of tissue distribution, expressed by the venom gland.

It is found in the secreted. Functionally, voltage-gated sodium channel inhibitor. In Scolopendra dehaani (Thai centipede), this protein is Mu-scoloptoxin(15)-Ssd1a.